The following is a 227-amino-acid chain: UPF0758 protein Psyc_1834 (227 aa).

The MPN domain maps to 102–224 (GLGRSQMVKD…TLSYAENCLA (123 aa)). 3 residues coordinate Zn(2+): histidine 173, histidine 175, and aspartate 186. Positions 173-186 (HNHPHTDATPSTAD) match the JAMM motif motif.

Belongs to the UPF0758 family.

This chain is UPF0758 protein Psyc_1834, found in Psychrobacter arcticus (strain DSM 17307 / VKM B-2377 / 273-4).